The chain runs to 246 residues: MyoD family inhibitor (246 aa).

2 disordered regions span residues 1–76 and 91–151; these read MYQV…LDST and GNPL…SKST. The segment covering 14 to 26 has biased composition (low complexity); the sequence is APYGAPSAAPGPA. The MDFI domain maps to 99–246; sequence LLPNDSGHPS…MECCGLCFSS (148 aa).

It belongs to the MDFI family. Interacts (via C-terminus) with AXIN1 and LEF1. Interacts with CCNT2. Interacts (via C-terminus) with Piezo channel composed of PIEZO1 or PIEZO2; the interaction prolongs Piezo channel inactivation.

It localises to the nucleus. The protein resides in the cytoplasm. Functionally, inhibits the transactivation activity of the Myod family of myogenic factors and represses myogenesis. Acts by associating with Myod family members and retaining them in the cytoplasm by masking their nuclear localization signals. Can also interfere with the DNA-binding activity of Myod family members. Plays an important role in trophoblast and chondrogenic differentiation. Regulates the transcriptional activity of TCF7L1/TCF3 by interacting directly with TCF7L1/TCF3 and preventing it from binding DNA. Binds to the axin complex, resulting in an increase in the level of free beta-catenin. Affects axin regulation of the WNT and JNK signaling pathways. Regulates the activity of mechanosensitive Piezo channel. The polypeptide is MyoD family inhibitor (MDFI) (Homo sapiens (Human)).